Consider the following 546-residue polypeptide: Delta-1-pyrroline-5-carboxylate dehydrogenase (546 aa).

279–284 serves as a coordination point for NAD(+); that stretch reads KDISSN. Glu-297 (proton acceptor) is an active-site residue. The Nucleophile role is filled by Cys-331.

The protein belongs to the aldehyde dehydrogenase family.

Its subcellular location is the cytoplasm. It carries out the reaction L-glutamate 5-semialdehyde + NAD(+) + H2O = L-glutamate + NADH + 2 H(+). Its pathway is amino-acid degradation; L-proline degradation into L-glutamate; L-glutamate from L-proline: step 2/2. This is Delta-1-pyrroline-5-carboxylate dehydrogenase (pruA) from Agaricus bisporus (White button mushroom).